The following is a 1262-amino-acid chain: Zinc finger protein 592 (1262 aa).

The tract at residues 23-45 (SLDAKEAIQAPSEENESPLKSSG) is disordered. A phosphoserine mark is found at Ser-78, Ser-142, Ser-145, and Ser-146. 3 disordered regions span residues 122–174 (SFTS…PPPG), 200–278 (KKEP…AHSK), and 294–494 (VANV…ASTP). Glycyl lysine isopeptide (Lys-Gly) (interchain with G-Cter in SUMO2) cross-links involve residues Lys-200 and Lys-204. 2 stretches are compositionally biased toward basic and acidic residues: residues 213 to 232 (QQEH…DLDS) and 298 to 308 (TKEDQPGHTKD). Positions 343–367 (PSDSPRSICSDSSSKGSPSVAASSP) are enriched in low complexity. Polar residues predominate over residues 454–463 (IKTSDSSSPC). Residues 484–494 (QQSTAPQASTP) are compositionally biased toward low complexity. Ser-529 carries the post-translational modification Phosphoserine. Residue Lys-546 forms a Glycyl lysine isopeptide (Lys-Gly) (interchain with G-Cter in SUMO2) linkage. Ser-573 is subject to Phosphoserine. Residues 587–612 (YCCLECGDAFALEKSLSQHYSRRSVH) form a C2H2-type 1; atypical zinc finger. The C2H2-type 2; atypical zinc-finger motif lies at 615 to 639 (VLCTLCSKTLLFFNKCSLLRHARDH). At Ser-691 the chain carries Phosphoserine. The C2H2-type 3; degenerate zinc finger occupies 711 to 731 (TKCPECHKQMRDYMVLATHFQ). The C2H2-type 4 zinc-finger motif lies at 740 to 764 (LTCQVCQMLLPNQCSFCAHQRIHAH). The C2H2-type 5; atypical zinc finger occupies 768–790 (YCCPECGVLCRSAYFQTHVKENC). 3 consecutive C2H2-type zinc fingers follow at residues 799–822 (YRCI…QERH), 827–850 (HKCA…TTQH), and 892–915 (FKCP…KNTH). Low complexity predominate over residues 924 to 935 (LSSLQSSTDTSS). The disordered stretch occupies residues 924-979 (LSSLQSSTDTSSNRPGSRAPAEPPATNVAARGSSLTAGRWGRPEAHRRAEARPRMR). Positions 964 to 976 (GRPEAHRRAEARP) are enriched in basic and acidic residues. 2 consecutive C2H2-type zinc fingers follow at residues 983–1006 (WTCQ…KKSH) and 1013–1036 (YPCR…RNNH). Residues 1043-1069 (YTCGYCTEDSPSFPRPSLLESHISLMH) form a C2H2-type 11; atypical zinc finger. Phosphoserine is present on Ser-1089. The C2H2-type 12; atypical zinc-finger motif lies at 1124–1146 (FQCAKCTFATDSELEFQSHIPQH). A C2H2-type 13 zinc finger spans residues 1153–1176 (AQCLLCGLCYTSTSSLNRHLFIVH). Ser-1198 and Ser-1202 each carry phosphoserine. The tract at residues 1222–1262 (PLVTDLGGQQGLALDEDSAQDPQNQPQASQDQNSHALSPQV) is disordered. A compositionally biased stretch (polar residues) spans 1241–1262 (QDPQNQPQASQDQNSHALSPQV).

This sequence belongs to the krueppel C2H2-type zinc-finger protein family. As to quaternary structure, interacts with ZMYND8. Expressed in the brain.

Its subcellular location is the nucleus. Functionally, may be involved in transcriptional regulation. This chain is Zinc finger protein 592 (Znf592), found in Mus musculus (Mouse).